A 405-amino-acid chain; its full sequence is tRNA (uracil(54)-C(5))-methyltransferase (405 aa).

Cys-61, Cys-67, Cys-70, and Cys-137 together coordinate [4Fe-4S] cluster. S-adenosyl-L-methionine contacts are provided by residues Gln-252, Tyr-278, Thr-283, 299–300, Asp-326, and Asp-340; that span reads DS. Cys-367 acts as the Nucleophile in catalysis. Glu-399 serves as the catalytic Proton acceptor.

The protein belongs to the class I-like SAM-binding methyltransferase superfamily. RNA M5U methyltransferase family.

The enzyme catalyses uridine(54) in tRNA + S-adenosyl-L-methionine = 5-methyluridine(54) in tRNA + S-adenosyl-L-homocysteine + H(+). With respect to regulation, activated by magnesium ions. Catalyzes the formation of 5-methyl-uridine at position 54 (m5U54) in tRNA. The protein is tRNA (uracil(54)-C(5))-methyltransferase of Pyrococcus abyssi (strain GE5 / Orsay).